The sequence spans 409 residues: Pyrophosphate--fructose 6-phosphate 1-phosphotransferase (409 aa).

Residue G14 participates in diphosphate binding. D123 lines the Mg(2+) pocket. Substrate-binding positions include 151–153 (TVD), 196–198 (MGR), E268, and 325–328 (YFAR). D153 (proton acceptor) is an active-site residue.

Belongs to the phosphofructokinase type A (PFKA) family. PPi-dependent PFK group II subfamily. Clade 'P' sub-subfamily. In terms of assembly, homodimer. It depends on Mg(2+) as a cofactor.

It is found in the cytoplasm. The enzyme catalyses beta-D-fructose 6-phosphate + diphosphate = beta-D-fructose 1,6-bisphosphate + phosphate + H(+). It participates in carbohydrate degradation; glycolysis; D-glyceraldehyde 3-phosphate and glycerone phosphate from D-glucose: step 3/4. Non-allosteric. Functionally, catalyzes the phosphorylation of D-fructose 6-phosphate, the first committing step of glycolysis. Uses inorganic phosphate (PPi) as phosphoryl donor instead of ATP like common ATP-dependent phosphofructokinases (ATP-PFKs), which renders the reaction reversible, and can thus function both in glycolysis and gluconeogenesis. Consistently, PPi-PFK can replace the enzymes of both the forward (ATP-PFK) and reverse (fructose-bisphosphatase (FBPase)) reactions. This is Pyrophosphate--fructose 6-phosphate 1-phosphotransferase from Methylomonas methanica.